A 129-amino-acid chain; its full sequence is Small ribosomal subunit protein uS8 (129 aa).

This sequence belongs to the universal ribosomal protein uS8 family. Part of the 30S ribosomal subunit.

One of the primary rRNA binding proteins, it binds directly to 16S rRNA central domain where it helps coordinate assembly of the platform of the 30S subunit. The protein is Small ribosomal subunit protein uS8 of Thermofilum pendens (strain DSM 2475 / Hrk 5).